A 1211-amino-acid polypeptide reads, in one-letter code: DNA-directed RNA polymerase subunit beta' (1211 aa).

Positions 60, 62, 75, and 78 each coordinate Zn(2+). Mg(2+)-binding residues include Asp-450, Asp-452, and Asp-454. Zn(2+) contacts are provided by Cys-819, Cys-893, Cys-900, and Cys-903.

Belongs to the RNA polymerase beta' chain family. As to quaternary structure, the RNAP catalytic core consists of 2 alpha, 1 beta, 1 beta' and 1 omega subunit. When a sigma factor is associated with the core the holoenzyme is formed, which can initiate transcription. The cofactor is Mg(2+). Zn(2+) is required as a cofactor.

It carries out the reaction RNA(n) + a ribonucleoside 5'-triphosphate = RNA(n+1) + diphosphate. Functionally, DNA-dependent RNA polymerase catalyzes the transcription of DNA into RNA using the four ribonucleoside triphosphates as substrates. This is DNA-directed RNA polymerase subunit beta' from Streptococcus equi subsp. equi (strain 4047).